We begin with the raw amino-acid sequence, 234 residues long: UPF0502 protein Reut_B4455 (234 aa).

It belongs to the UPF0502 family.

This Cupriavidus pinatubonensis (strain JMP 134 / LMG 1197) (Cupriavidus necator (strain JMP 134)) protein is UPF0502 protein Reut_B4455.